The chain runs to 331 residues: Pantothenate kinase (331 aa).

109 to 116 (GSVAVGKS) contacts ATP.

The protein belongs to the prokaryotic pantothenate kinase family.

It is found in the cytoplasm. It catalyses the reaction (R)-pantothenate + ATP = (R)-4'-phosphopantothenate + ADP + H(+). Its pathway is cofactor biosynthesis; coenzyme A biosynthesis; CoA from (R)-pantothenate: step 1/5. The polypeptide is Pantothenate kinase (Sinorhizobium fredii (strain NBRC 101917 / NGR234)).